A 751-amino-acid chain; its full sequence is Photosystem I P700 chlorophyll a apoprotein A1 (751 aa).

8 consecutive transmembrane segments (helical) span residues 72-95 (IFSA…FHGA), 158-181 (LYCT…FHYH), 197-221 (MNHH…HVSL), 293-311 (TAHH…GHMY), 348-371 (WHAQ…HHMY), 387-413 (LSLF…IFMV), 435-457 (AIIS…LYVH), and 532-550 (FLVH…LILL). Residues C574 and C583 each contribute to the [4Fe-4S] cluster site. 2 consecutive transmembrane segments (helical) span residues 590–611 (HVFL…HFSW) and 665–687 (LSAY…MFLF). A chlorophyll a'-binding site is contributed by H676. Chlorophyll a-binding residues include M684 and Y692. Phylloquinone is bound at residue W693. Residues 725–745 (AVGVTHYLLGGIVTTWAFFLA) traverse the membrane as a helical segment.

It belongs to the PsaA/PsaB family. As to quaternary structure, the PsaA/B heterodimer binds the P700 chlorophyll special pair and subsequent electron acceptors. PSI consists of a core antenna complex that captures photons, and an electron transfer chain that converts photonic excitation into a charge separation. The cyanobacterial PSI reaction center is composed of one copy each of PsaA,B,C,D,E,F,I,J,K,L,M and X, and forms trimeric complexes. The cofactor is PSI electron transfer chain: 5 chlorophyll a, 1 chlorophyll a', 2 phylloquinones and 3 4Fe-4S clusters. PSI core antenna: 90 chlorophyll a, 22 carotenoids, 3 phospholipids and 1 galactolipid. P700 is a chlorophyll a/chlorophyll a' dimer, A0 is one or more chlorophyll a, A1 is one or both phylloquinones and FX is a shared 4Fe-4S iron-sulfur center..

It localises to the cellular thylakoid membrane. It catalyses the reaction reduced [plastocyanin] + hnu + oxidized [2Fe-2S]-[ferredoxin] = oxidized [plastocyanin] + reduced [2Fe-2S]-[ferredoxin]. In terms of biological role, psaA and PsaB bind P700, the primary electron donor of photosystem I (PSI), as well as the electron acceptors A0, A1 and FX. PSI is a plastocyanin/cytochrome c6-ferredoxin oxidoreductase, converting photonic excitation into a charge separation, which transfers an electron from the donor P700 chlorophyll pair to the spectroscopically characterized acceptors A0, A1, FX, FA and FB in turn. Oxidized P700 is reduced on the lumenal side of the thylakoid membrane by plastocyanin or cytochrome c6. The protein is Photosystem I P700 chlorophyll a apoprotein A1 of Gloeothece citriformis (strain PCC 7424) (Cyanothece sp. (strain PCC 7424)).